The following is a 185-amino-acid chain: Ribosome-recycling factor (185 aa).

This sequence belongs to the RRF family.

It is found in the cytoplasm. In terms of biological role, responsible for the release of ribosomes from messenger RNA at the termination of protein biosynthesis. May increase the efficiency of translation by recycling ribosomes from one round of translation to another. This chain is Ribosome-recycling factor, found in Buchnera aphidicola subsp. Acyrthosiphon pisum (strain APS) (Acyrthosiphon pisum symbiotic bacterium).